A 216-amino-acid polypeptide reads, in one-letter code: Probable nicotinate-nucleotide adenylyltransferase (216 aa).

Belongs to the NadD family.

It carries out the reaction nicotinate beta-D-ribonucleotide + ATP + H(+) = deamido-NAD(+) + diphosphate. It participates in cofactor biosynthesis; NAD(+) biosynthesis; deamido-NAD(+) from nicotinate D-ribonucleotide: step 1/1. Functionally, catalyzes the reversible adenylation of nicotinate mononucleotide (NaMN) to nicotinic acid adenine dinucleotide (NaAD). This Citrifermentans bemidjiense (strain ATCC BAA-1014 / DSM 16622 / JCM 12645 / Bem) (Geobacter bemidjiensis) protein is Probable nicotinate-nucleotide adenylyltransferase.